A 215-amino-acid chain; its full sequence is MOB kinase activator-like 1A (215 aa).

A disordered region spans residues 1–27 (MSLFGLGRNQKTFRPKKSAPSGSKGAQ). 4 residues coordinate Zn(2+): Cys-79, Cys-84, His-161, and His-166.

The protein belongs to the MOB1/phocein family. As to quaternary structure, interacts with SIK1 at the plasma membrane and in the nucleus. Constitutively expressed. In 3- to 4-day-old seedlings, expression is high in the shoot apical meristem and along the vasculature in cotyledons, hypocotyls and roots. At the root tip, expression is detected in columella and lateral root cap cells as well as in the stem cell niche around the quiescent center (QC). The levels of expression decrease progressively in the meristematic zone from the root tip towards the base of the root, becoming stronger again in the elongation zone. In flowers, expression appears localized in ovules and pollen.

It localises to the nucleus. Its subcellular location is the cell membrane. The protein localises to the vacuole membrane. In terms of biological role, plays a key role in regulation of cell expansion and cell division. Required for proper plant development, the correct patterning of the root meristem and the control of root growth. Involved in both sporogenesis and gametogenesis. The polypeptide is MOB kinase activator-like 1A (Arabidopsis thaliana (Mouse-ear cress)).